Reading from the N-terminus, the 629-residue chain is 1-deoxy-D-xylulose-5-phosphate synthase (629 aa).

Thiamine diphosphate contacts are provided by residues His-72 and Gly-113–Ser-115. Mg(2+) is bound at residue Asp-144. Residues Gly-145–Ala-146, Asn-173, Tyr-284, and Glu-366 each bind thiamine diphosphate. Asn-173 is a binding site for Mg(2+).

The protein belongs to the transketolase family. DXPS subfamily. Homodimer. Mg(2+) is required as a cofactor. The cofactor is thiamine diphosphate.

The enzyme catalyses D-glyceraldehyde 3-phosphate + pyruvate + H(+) = 1-deoxy-D-xylulose 5-phosphate + CO2. The protein operates within metabolic intermediate biosynthesis; 1-deoxy-D-xylulose 5-phosphate biosynthesis; 1-deoxy-D-xylulose 5-phosphate from D-glyceraldehyde 3-phosphate and pyruvate: step 1/1. Functionally, catalyzes the acyloin condensation reaction between C atoms 2 and 3 of pyruvate and glyceraldehyde 3-phosphate to yield 1-deoxy-D-xylulose-5-phosphate (DXP). The sequence is that of 1-deoxy-D-xylulose-5-phosphate synthase from Halalkalibacterium halodurans (strain ATCC BAA-125 / DSM 18197 / FERM 7344 / JCM 9153 / C-125) (Bacillus halodurans).